The sequence spans 579 residues: V-type ATP synthase alpha chain (579 aa).

227–234 (GGFGTGKT) is an ATP binding site.

Belongs to the ATPase alpha/beta chains family.

It catalyses the reaction ATP + H2O + 4 H(+)(in) = ADP + phosphate + 5 H(+)(out). Produces ATP from ADP in the presence of a proton gradient across the membrane. The V-type alpha chain is a catalytic subunit. This chain is V-type ATP synthase alpha chain, found in Anaeromyxobacter sp. (strain K).